The following is a 125-amino-acid chain: MGFWKFPPFLVLSILVLYQAGMFHAAPFRSVFDGRFDPATLDEEESRLLLAAMVNDYEQMRARESEKAQKTEGSRIQKRACNTATCMTHRLAGWLSRSGSMVRSNLLPTKMGFKIFNGPRRNSWF.

The signal sequence occupies residues 1 to 25 (MGFWKFPPFLVLSILVLYQAGMFHA). Residues 26 to 77 (APFRSVFDGRFDPATLDEEESRLLLAAMVNDYEQMRARESEKAQKTEGSRIQ) constitute a propeptide that is removed on maturation. Cys81 and Cys86 are joined by a disulfide.

Belongs to the calcitonin family.

The protein resides in the secreted. Its function is as follows. Stimulates cAMP production in porcine kidney cell line LLC-PK1 via the calcitonin receptor (CT) but not via the CT-like (CL) receptor. This chain is Calcitonin receptor-stimulating peptide 1 (CRSP1), found in Bos taurus (Bovine).